The following is a 109-amino-acid chain: MSQYAPSPDFKRALDSSPEANTEDDKTEEDVPMPKNYLWLTIVSCFCPAYPINIVALVFSIMSLNSYNDGDYEGARRLGRNAKWVAIASIIIGLLIIGISCAVHFTRNA.

Positions 1 to 30 (MSQYAPSPDFKRALDSSPEANTEDDKTEED) are disordered. At 1–41 (MSQYAPSPDFKRALDSSPEANTEDDKTEEDVPMPKNYLWLT) the chain is on the cytoplasmic side. The segment covering 21–30 (NTEDDKTEED) has biased composition (acidic residues). The segment at residues 42-62 (IVSCFCPAYPINIVALVFSIM) is an intramembrane region (helical). At 63 to 84 (SLNSYNDGDYEGARRLGRNAKW) the chain is on the cytoplasmic side. A helical membrane pass occupies residues 85–105 (VAIASIIIGLLIIGISCAVHF). Over 106–109 (TRNA) the chain is Extracellular.

The protein belongs to the CD225/Dispanin family. As to quaternary structure, interacts with the giant stinging tree toxin ExTxA (AC P0DQP3). Interacts with Nav1.7/SCN9A. Interacts with Nav1.1/SCN1A, Nav1.2/SCN2A, Nav1.3/SCN3A, Nav1.4/SCN4A, Nav1.5/SCN5A, and Nav1.6/SCN8A.

The protein resides in the cell membrane. In terms of biological role, probable accessory protein of voltage-gated sodium channels. This is Transmembrane protein 233 from Homo sapiens (Human).